Here is a 116-residue protein sequence, read N- to C-terminus: CDKN2AIP N-terminal-like protein (116 aa).

M1 carries the N-acetylmethionine modification. The 93-residue stretch at 24–116 folds into the XRN2-binding (XTBD) domain; the sequence is AEQFRSYSES…RSELMKKHQS (93 aa).

This sequence belongs to the CARF family. As to quaternary structure, interacts with XRN2; the interaction is direct.

The protein is CDKN2AIP N-terminal-like protein (Cdkn2aipnl) of Rattus norvegicus (Rat).